The primary structure comprises 349 residues: Anthranilate phosphoribosyltransferase (349 aa).

5-phospho-alpha-D-ribose 1-diphosphate contacts are provided by residues G82, 85–86 (GD), 92–95 (NVSS), 110–118 (KHGNRAVSG), and S122. G82 is an anthranilate binding site. Mg(2+) is bound at residue S94. Anthranilate is bound at residue N113. R168 is a binding site for anthranilate. Residues D227 and E228 each coordinate Mg(2+).

It belongs to the anthranilate phosphoribosyltransferase family. In terms of assembly, homodimer. Mg(2+) serves as cofactor.

It carries out the reaction N-(5-phospho-beta-D-ribosyl)anthranilate + diphosphate = 5-phospho-alpha-D-ribose 1-diphosphate + anthranilate. Its pathway is amino-acid biosynthesis; L-tryptophan biosynthesis; L-tryptophan from chorismate: step 2/5. Functionally, catalyzes the transfer of the phosphoribosyl group of 5-phosphorylribose-1-pyrophosphate (PRPP) to anthranilate to yield N-(5'-phosphoribosyl)-anthranilate (PRA). This Pseudomonas paraeruginosa (strain DSM 24068 / PA7) (Pseudomonas aeruginosa (strain PA7)) protein is Anthranilate phosphoribosyltransferase.